The primary structure comprises 319 residues: D-alanine--D-alanine ligase (319 aa).

The ATP-grasp domain maps to 120–315 (KRVLAQAGVP…YPELLRRLVE (196 aa)). 147–198 (DPPFFVKPANTGSSVGISRVERFQDLEAALALAFRYDEKAVVEKALSPVREL) lines the ATP pocket. Mg(2+) is bound by residues Asp-270, Glu-282, and Asn-284.

Belongs to the D-alanine--D-alanine ligase family. The cofactor is Mg(2+). Mn(2+) serves as cofactor.

It is found in the cytoplasm. The catalysed reaction is 2 D-alanine + ATP = D-alanyl-D-alanine + ADP + phosphate + H(+). The protein operates within cell wall biogenesis; peptidoglycan biosynthesis. Cell wall formation. In Thermus thermophilus (strain ATCC BAA-163 / DSM 7039 / HB27), this protein is D-alanine--D-alanine ligase.